The following is a 205-amino-acid chain: Methylthioribulose-1-phosphate dehydratase (205 aa).

C75 is a binding site for substrate. Positions 93 and 95 each coordinate Zn(2+). E116 serves as the catalytic Proton donor/acceptor. H171 lines the Zn(2+) pocket.

It belongs to the aldolase class II family. MtnB subfamily. It depends on Zn(2+) as a cofactor.

Its subcellular location is the cytoplasm. It catalyses the reaction 5-(methylsulfanyl)-D-ribulose 1-phosphate = 5-methylsulfanyl-2,3-dioxopentyl phosphate + H2O. Its pathway is amino-acid biosynthesis; L-methionine biosynthesis via salvage pathway; L-methionine from S-methyl-5-thio-alpha-D-ribose 1-phosphate: step 2/6. Functionally, catalyzes the dehydration of methylthioribulose-1-phosphate (MTRu-1-P) into 2,3-diketo-5-methylthiopentyl-1-phosphate (DK-MTP-1-P). The polypeptide is Methylthioribulose-1-phosphate dehydratase (Kluyveromyces lactis (strain ATCC 8585 / CBS 2359 / DSM 70799 / NBRC 1267 / NRRL Y-1140 / WM37) (Yeast)).